The chain runs to 866 residues: DNA mismatch repair protein MutS (866 aa).

613–620 (GPNMGGKS) contributes to the ATP binding site.

The protein belongs to the DNA mismatch repair MutS family.

This protein is involved in the repair of mismatches in DNA. It is possible that it carries out the mismatch recognition step. This protein has a weak ATPase activity. The protein is DNA mismatch repair protein MutS of Haemophilus ducreyi (strain 35000HP / ATCC 700724).